Consider the following 125-residue polypeptide: Unclassified hydrophobin 8 (125 aa).

An N-terminal signal peptide occupies residues 1–20 (MMFSKPVVLATTALATFAAA). 4 disulfides stabilise this stretch: Cys-31–Cys-105, Cys-38–Cys-99, Cys-39–Cys-90, and Cys-106–Cys-119.

This sequence belongs to the fungal hydrophobin family. Self-assembles to form functional amyloid fibrils called rodlets. Self-assembly into fibrillar rodlets occurs spontaneously at hydrophobic:hydrophilic interfaces and the rodlets further associate laterally to form amphipathic monolayers.

It is found in the secreted. The protein resides in the cell wall. Its function is as follows. Aerial growth, conidiation, and dispersal of filamentous fungi in the environment rely upon a capability of their secreting small amphipathic proteins called hydrophobins (HPBs) with low sequence identity. Class I can self-assemble into an outermost layer of rodlet bundles on aerial cell surfaces, conferring cellular hydrophobicity that supports fungal growth, development and dispersal; whereas Class II form highly ordered films at water-air interfaces through intermolecular interactions but contribute nothing to the rodlet structure. Hydph8 is an unclassified hydrophobin involved in mycelial growth. In Pleurotus ostreatus (strain PC15) (Oyster mushroom), this protein is Unclassified hydrophobin 8.